Consider the following 186-residue polypeptide: Large ribosomal subunit protein eL15 (186 aa).

The interval 163 to 186 is disordered; sequence RGLTSAGKKGRGLNKKGKGAEKVR. The span at 170 to 179 shows a compositional bias: basic residues; that stretch reads KKGRGLNKKG.

The protein belongs to the eukaryotic ribosomal protein eL15 family.

The chain is Large ribosomal subunit protein eL15 from Methanosphaera stadtmanae (strain ATCC 43021 / DSM 3091 / JCM 11832 / MCB-3).